The chain runs to 263 residues: 4-hydroxy-2-oxo-heptane-1,7-dioate aldolase (263 aa).

Histidine 45 (proton acceptor) is an active-site residue. Position 147 (glutamine 147) interacts with substrate. An a divalent metal cation-binding site is contributed by glutamate 149. Substrate is bound by residues alanine 174 and aspartate 175. Aspartate 175 contributes to the a divalent metal cation binding site.

This sequence belongs to the HpcH/HpaI aldolase family. Homohexamer; trimer of dimers. A divalent metal cation is required as a cofactor.

It catalyses the reaction 4-hydroxy-2-oxoheptanedioate = succinate semialdehyde + pyruvate. The protein operates within aromatic compound metabolism; 4-hydroxyphenylacetate degradation; pyruvate and succinate semialdehyde from 4-hydroxyphenylacetate: step 7/7. In terms of biological role, catalyzes the reversible retro-aldol cleavage of 4-hydroxy-2-ketoheptane-1,7-dioate (HKHD) to pyruvate and succinic semialdehyde. The protein is 4-hydroxy-2-oxo-heptane-1,7-dioate aldolase of Salmonella newport (strain SL254).